Reading from the N-terminus, the 322-residue chain is Lipoyl synthase 2 (322 aa).

Residues 1–36 (MKVILDLLNNDPRTTQRTERPRHPEKANRPDTPMES) form a disordered region. The segment covering 14–34 (TTQRTERPRHPEKANRPDTPM) has biased composition (basic and acidic residues). Residues Cys67, Cys72, Cys78, Cys93, Cys97, Cys100, and Ser306 each contribute to the [4Fe-4S] cluster site. A Radical SAM core domain is found at 79–295 (WAKKHATFMI…EKTAYAKGFL (217 aa)).

Belongs to the radical SAM superfamily. Lipoyl synthase family. [4Fe-4S] cluster is required as a cofactor.

The protein localises to the cytoplasm. It carries out the reaction [[Fe-S] cluster scaffold protein carrying a second [4Fe-4S](2+) cluster] + N(6)-octanoyl-L-lysyl-[protein] + 2 oxidized [2Fe-2S]-[ferredoxin] + 2 S-adenosyl-L-methionine + 4 H(+) = [[Fe-S] cluster scaffold protein] + N(6)-[(R)-dihydrolipoyl]-L-lysyl-[protein] + 4 Fe(3+) + 2 hydrogen sulfide + 2 5'-deoxyadenosine + 2 L-methionine + 2 reduced [2Fe-2S]-[ferredoxin]. It participates in protein modification; protein lipoylation via endogenous pathway; protein N(6)-(lipoyl)lysine from octanoyl-[acyl-carrier-protein]: step 2/2. In terms of biological role, catalyzes the radical-mediated insertion of two sulfur atoms into the C-6 and C-8 positions of the octanoyl moiety bound to the lipoyl domains of lipoate-dependent enzymes, thereby converting the octanoylated domains into lipoylated derivatives. This chain is Lipoyl synthase 2, found in Bradyrhizobium diazoefficiens (strain JCM 10833 / BCRC 13528 / IAM 13628 / NBRC 14792 / USDA 110).